The chain runs to 288 residues: MAAKIIDGKTIAQQVRSEVAQKVQARIAAGLRAPGLAVVLVGSNPASQIYVASKRKACEEVGFVSRSYDLPETTSEAELLELIDTLNADNTIDGILVQLPLPAGIDNVKVLERIHPDKDVDGFHPYNVGRLCQRAPRLRPCTPRGIVTLLERYNIDTFGLNAVVIGASNIVGRPMSMELLLAGCTTTVTHRFTKNLRHHVENADLLIVAVGKPGFIPGDWIKEGAIVIDVGINRLENGKVVGDVVFEDAAKRASYITPVPGGVGPMTVATLIENTLQACVEYHDPQDE.

Residues 166 to 168 (GAS) and isoleucine 232 contribute to the NADP(+) site.

The protein belongs to the tetrahydrofolate dehydrogenase/cyclohydrolase family. In terms of assembly, homodimer.

It catalyses the reaction (6R)-5,10-methylene-5,6,7,8-tetrahydrofolate + NADP(+) = (6R)-5,10-methenyltetrahydrofolate + NADPH. It carries out the reaction (6R)-5,10-methenyltetrahydrofolate + H2O = (6R)-10-formyltetrahydrofolate + H(+). It functions in the pathway one-carbon metabolism; tetrahydrofolate interconversion. Catalyzes the oxidation of 5,10-methylenetetrahydrofolate to 5,10-methenyltetrahydrofolate and then the hydrolysis of 5,10-methenyltetrahydrofolate to 10-formyltetrahydrofolate. This Escherichia coli O8 (strain IAI1) protein is Bifunctional protein FolD.